The chain runs to 523 residues: Inosine-5'-monophosphate dehydrogenase 2 (523 aa).

CBS domains lie at 121–183 (FINN…VQDV) and 184–240 (MTKN…PLAS). Residues 278–280 (DSS) and 328–330 (GMG) each bind NAD(+). K(+)-binding residues include Gly330 and Gly332. Ser333 is a binding site for IMP. Cys335 lines the K(+) pocket. Cys335 serves as the catalytic Thioimidate intermediate. IMP contacts are provided by residues 368 to 370 (DGG), 391 to 392 (GG), and 415 to 419 (YRGMG). Arg437 (proton acceptor) is an active-site residue. Gln449 contacts IMP. K(+) is bound by residues Glu508, Gly509, and Gly510.

This sequence belongs to the IMPDH/GMPR family. As to quaternary structure, homotetramer. Seems to be able to form heterotetramers composed from more than 1 of the 3 IMPDH gene products (IMD2-4). K(+) is required as a cofactor.

It localises to the cytoplasm. It catalyses the reaction IMP + NAD(+) + H2O = XMP + NADH + H(+). It participates in purine metabolism; XMP biosynthesis via de novo pathway; XMP from IMP: step 1/1. Mycophenolic acid (MPA) is a non-competitive inhibitor that prevents formation of the closed enzyme conformation by binding to the same site as the amobile flap. In contrast, mizoribine monophosphate (MZP) is a competitive inhibitor that induces the closed conformation. MPA is a potent inhibitor of mammalian IMPDHs but a poor inhibitor of the bacterial enzymes. MZP is a more potent inhibitor of bacterial IMPDH. Its function is as follows. Catalyzes the conversion of inosine 5'-phosphate (IMP) to xanthosine 5'-phosphate (XMP), the first committed and rate-limiting step in the de novo synthesis of guanine nucleotides, and therefore plays an important role in the regulation of cell growth. In contrast to the other IMPDH alleles IMD3 and IMD4, the enzymatic activity of IMD2 seems to be intrinsically drug resistant. This chain is Inosine-5'-monophosphate dehydrogenase 2, found in Saccharomyces cerevisiae (strain ATCC 204508 / S288c) (Baker's yeast).